The chain runs to 552 residues: Acyl-CoA synthetase FUM10 (552 aa).

183 to 194 is an AMP binding site; the sequence is ELFTSGTTGAPK. An AMP-binding region spans residues 463–536; sequence EIEHVARLHD…QEIPYNRTGK (74 aa).

It belongs to the ATP-dependent AMP-binding enzyme family.

It participates in mycotoxin biosynthesis. Its function is as follows. Acyl-CoA synthetase; part of the gene cluster that mediates the biosynthesis of fumonisins B1 (FB1), B2 (FB2), B3 (FB3), and B4 (FB4), which are carcinogenic mycotoxins. Within the pathway, FUM10 is involved the addition of the tricarballylic moieties to the carbon backbone. FUM10 catalyzes the CoA activation of citrate to form tricarballylic acid. The biosynthesis starts with the FUM1-catalyzed carbon chain assembly from one molecule of acetyl-CoA, eight molecules of malonyl-CoA, and two molecules of methionine (in S-adenosyl form). The C18 polyketide chain is released from the enzyme by a nucleophilic attack of a carbanion, which is derived from R-carbon of alanine by decarboxylation, on the carbonyl carbon of polyketide acyl chain. This step is catalyzed by the pyridoxal 5'-phosphate-dependent aminoacyl transferase FUM8. The resultant 3-keto intermediate is then stereospecifically reduced to a 3-hydroxyl product by reductase FUM13. Subsequent oxidations at C-10 by the cytochrome P450 monooxygenase FUM2, C-14 and C-15 by FUM6, FUM12 or FUM15, tricarballylic esterification of the hydroxyl groups on C-14 and C-15 by acyltransferase FUM14, and C-5 hydroxylation by 2-keto-glutarate-dependent dioxygenase FUM3 furnish the biosynthesis of fumonisins. The tricarballylic moieties are most likely derived from the citric acid cycle, and their addition to the carbon backbone may involve FUM7, FUM10, FUM11 and FUM14. In Gibberella moniliformis (strain M3125 / FGSC 7600) (Maize ear and stalk rot fungus), this protein is Acyl-CoA synthetase FUM10.